Here is a 397-residue protein sequence, read N- to C-terminus: Ubiquitin-like modifier-activating enzyme 5 (397 aa).

ATP is bound by residues Gly-76, Asp-97, Lys-120, Asn-143, and Asn-177. Zn(2+) contacts are provided by Cys-219 and Cys-222. Cys-243 (glycyl thioester intermediate) is an active-site residue. Zn(2+) is bound by residues Cys-296 and Cys-301. The disordered stretch occupies residues 362 to 384 (LAYEPPASTKHSETTSTTAVSDD). The segment covering 375 to 384 (TTSTTAVSDD) has biased composition (low complexity).

The protein belongs to the ubiquitin-activating E1 family. UBA5 subfamily.

Functionally, E1-like enzyme which activates UFM1. This is Ubiquitin-like modifier-activating enzyme 5 from Aedes aegypti (Yellowfever mosquito).